We begin with the raw amino-acid sequence, 736 residues long: Neprilysin-2 (736 aa).

Topologically, residues 1-19 (MRPDEEDGTTKSPGSRWTR) are cytoplasmic. The helical; Signal-anchor for type II membrane protein transmembrane segment at 20 to 40 (IWAIIALILLILFLLVLGAAI) threads the bilayer. Residues 41–736 (YFYINYKDSS…MNPREKCRVW (696 aa)) lie on the Extracellular side of the membrane. A Peptidase M13 domain is found at 52–736 (VCLSPGCIKT…MNPREKCRVW (685 aa)). Disulfide bonds link Cys53/Cys58, Cys76/Cys721, Cys84/Cys681, Cys142/Cys399, and Cys608/Cys733. Positions 103-123 (FENLGQDLEFALKELLDENDE) form a coiled coil. Residue His571 coordinates Zn(2+). Residue Glu572 is part of the active site. The Zn(2+) site is built by His575 and Glu633. The active-site Proton donor is the Asp637.

The protein belongs to the peptidase M13 family. The cofactor is Zn(2+). Expressed in muscle cells, GLR cells, SMB motor neurons and AIM interneurons.

It localises to the membrane. Functionally, required for olfactory plasticity, which is the change from positive chemotaxis to dispersal after prolonged exposure to an odorant. Thought to antagonise snet-1 by degrading excess snet-1 peptides and thus enabling olfactory plasticity. The sequence is that of Neprilysin-2 from Caenorhabditis elegans.